The following is a 758-amino-acid chain: 5-methyltetrahydropteroyltriglutamate--homocysteine methyltransferase (758 aa).

5-methyltetrahydropteroyltri-L-glutamate is bound by residues 16–19 (RELK) and K112. Residues 433–435 (IGS) and E486 each bind L-homocysteine. L-methionine-binding positions include 433–435 (IGS) and E486. 5-methyltetrahydropteroyltri-L-glutamate is bound by residues 517-518 (RC) and W563. D601 is a binding site for L-homocysteine. D601 is an L-methionine binding site. E607 contributes to the 5-methyltetrahydropteroyltri-L-glutamate binding site. 3 residues coordinate Zn(2+): H643, C645, and E667. H696 acts as the Proton donor in catalysis. Zn(2+) is bound at residue C728.

The protein belongs to the vitamin-B12 independent methionine synthase family. Zn(2+) is required as a cofactor.

The enzyme catalyses 5-methyltetrahydropteroyltri-L-glutamate + L-homocysteine = tetrahydropteroyltri-L-glutamate + L-methionine. Its pathway is amino-acid biosynthesis; L-methionine biosynthesis via de novo pathway; L-methionine from L-homocysteine (MetE route): step 1/1. Its function is as follows. Catalyzes the transfer of a methyl group from 5-methyltetrahydrofolate to homocysteine resulting in methionine formation. The polypeptide is 5-methyltetrahydropteroyltriglutamate--homocysteine methyltransferase (Neisseria meningitidis serogroup C / serotype 2a (strain ATCC 700532 / DSM 15464 / FAM18)).